Consider the following 431-residue polypeptide: Glucose-1-phosphate adenylyltransferase (431 aa).

Lys39 serves as a coordination point for beta-D-fructose 1,6-bisphosphate. Arg40, His46, and Arg52 together coordinate AMP. Alpha-D-glucose 1-phosphate is bound at residue Tyr114. AMP is bound at residue Arg130. Alpha-D-glucose 1-phosphate-binding positions include Gly179, 194–195 (EK), and Ser212. 2 residues coordinate AMP: Glu370 and Arg386. Residues 419–423 (REMLR) and 429–431 (QER) each bind beta-D-fructose 1,6-bisphosphate.

It belongs to the bacterial/plant glucose-1-phosphate adenylyltransferase family. As to quaternary structure, homotetramer.

It carries out the reaction alpha-D-glucose 1-phosphate + ATP + H(+) = ADP-alpha-D-glucose + diphosphate. It functions in the pathway glycan biosynthesis; glycogen biosynthesis. With respect to regulation, allosterically activated by fructose-1,6-bisphosphate (F16BP) and inhibited by AMP. Its function is as follows. Involved in the biosynthesis of ADP-glucose, a building block required for the elongation reactions to produce glycogen. Catalyzes the reaction between ATP and alpha-D-glucose 1-phosphate (G1P) to produce pyrophosphate and ADP-Glc. The polypeptide is Glucose-1-phosphate adenylyltransferase (Salmonella dublin (strain CT_02021853)).